The sequence spans 558 residues: AP2-like ethylene-responsive transcription factor AIL5 (558 aa).

Residues 1-54 are compositionally biased toward low complexity; it reads MKNNNNKSSSSSSYDSSLSPSSSSSSHQNWLSFSLSNNNNNFNSSSNPNLTSST. 3 disordered regions span residues 1–65, 74–93, and 166–195; these read MKNN…PSHL, SPVE…ATAV, and HSSE…KNVE. 2 DNA-binding regions (AP2/ERF) span residues 203 to 269 and 305 to 363; these read IYRG…TNFP and MYRG…TNFD. Residues 387–406 form a disordered region; that stretch reads SPATAAADKTVDLSPSDSPS.

Belongs to the AP2/ERF transcription factor family. AP2 subfamily. In terms of tissue distribution, expressed in roots, seedlings, inflorescence, and siliques. Also detected at low levels in leaves.

Its subcellular location is the nucleus. Its function is as follows. Probably acts as a transcriptional activator. Binds to the GCC-box pathogenesis-related promoter element. May be involved in the regulation of gene expression by stress factors and by components of stress signal transduction pathways. Involved in the regulation of floral organs size. The protein is AP2-like ethylene-responsive transcription factor AIL5 of Arabidopsis thaliana (Mouse-ear cress).